The following is a 150-amino-acid chain: MAPKKKEVTRIAKLNLIGGQAKPGPALASVGINMAEFTKSFNDKTKDQNGKVIPVIITAYKDKSFDYVIKTTPVTFLLKDIAKIKSGAKDPKKQTVATISKEQALEIARYKLIDMTAYDEEAALRMIAGSAKQMGIVIEGVSAYKEKKGN.

This sequence belongs to the universal ribosomal protein uL11 family. As to quaternary structure, part of the ribosomal stalk of the 50S ribosomal subunit. Interacts with L10 and the large rRNA to form the base of the stalk. L10 forms an elongated spine to which L12 dimers bind in a sequential fashion forming a multimeric L10(L12)X complex. In terms of processing, one or more lysine residues are methylated.

Its function is as follows. Forms part of the ribosomal stalk which helps the ribosome interact with GTP-bound translation factors. In Ureaplasma parvum serovar 3 (strain ATCC 27815 / 27 / NCTC 11736), this protein is Large ribosomal subunit protein uL11.